The chain runs to 189 residues: GTP cyclohydrolase 1 (189 aa).

The Zn(2+) site is built by Cys-79, His-82, and Cys-150.

The protein belongs to the GTP cyclohydrolase I family. As to quaternary structure, toroid-shaped homodecamer, composed of two pentamers of five dimers.

The enzyme catalyses GTP + H2O = 7,8-dihydroneopterin 3'-triphosphate + formate + H(+). The protein operates within cofactor biosynthesis; 7,8-dihydroneopterin triphosphate biosynthesis; 7,8-dihydroneopterin triphosphate from GTP: step 1/1. The sequence is that of GTP cyclohydrolase 1 from Rickettsia massiliae (strain Mtu5).